The chain runs to 129 residues: Large ribosomal subunit protein bL17 (129 aa).

The protein belongs to the bacterial ribosomal protein bL17 family. Part of the 50S ribosomal subunit. Contacts protein L32.

The chain is Large ribosomal subunit protein bL17 from Yersinia pseudotuberculosis serotype O:1b (strain IP 31758).